The following is a 139-amino-acid chain: D-ribose pyranase (139 aa).

The active-site Proton donor is the histidine 20. Residues aspartate 28, histidine 106, and 128-130 (YAN) contribute to the substrate site.

This sequence belongs to the RbsD / FucU family. RbsD subfamily. In terms of assembly, homodecamer.

Its subcellular location is the cytoplasm. It carries out the reaction beta-D-ribopyranose = beta-D-ribofuranose. It functions in the pathway carbohydrate metabolism; D-ribose degradation; D-ribose 5-phosphate from beta-D-ribopyranose: step 1/2. Catalyzes the interconversion of beta-pyran and beta-furan forms of D-ribose. This chain is D-ribose pyranase, found in Histophilus somni (strain 2336) (Haemophilus somnus).